The chain runs to 104 residues: Small ribosomal subunit protein uS10 (104 aa).

It belongs to the universal ribosomal protein uS10 family. Part of the 30S ribosomal subunit.

Functionally, involved in the binding of tRNA to the ribosomes. This is Small ribosomal subunit protein uS10 from Buchnera aphidicola subsp. Baizongia pistaciae (strain Bp).